The following is a 213-amino-acid chain: Thymidylate kinase (213 aa).

An ATP-binding site is contributed by 10 to 17 (GLEGAGKT).

Belongs to the thymidylate kinase family.

The catalysed reaction is dTMP + ATP = dTDP + ADP. Functionally, phosphorylation of dTMP to form dTDP in both de novo and salvage pathways of dTTP synthesis. The protein is Thymidylate kinase of Enterobacter sp. (strain 638).